The primary structure comprises 233 residues: MWQLLLPTALLLLVSAGMRTEDLPKAVVFLEPQWYSVLEKDSVTLKCQGAYSPEDNSTQWFHNENLISSQASSYFIDAATVNDSGEYRCQTNLSTLSDPVQLEVHIGWLLLQAPRWVFKEEDPIHLRCHSWKNTALHKVTYLQNGKDRKYFHHNSDFHIPKATLKDSGSYFCRGLVGSKNVSSETVNITITQGLAVSTISSFSPPGYQVSFCLVMVLLFAVDTGLYFSVKTNI.

The N-terminal stretch at 1-16 (MWQLLLPTALLLLVSA) is a signal peptide. Ig-like C2-type domains lie at 40–96 (KDSV…LSTL) and 121–179 (EDPI…VGSK). Cys47 and Cys89 are oxidised to a cystine. Residues Asn56, Asn63, Asn82, and Asn92 are each glycosylated (N-linked (GlcNAc...) asparagine). Residues Cys128 and Cys172 are joined by a disulfide bond. 2 N-linked (GlcNAc...) asparagine glycosylation sites follow: Asn180 and Asn187. The GPI-anchor amidated serine moiety is linked to residue Ser200. A propeptide spans 201 to 233 (SFSPPGYQVSFCLVMVLLFAVDTGLYFSVKTNI) (removed in mature form).

In terms of assembly, monomer. Interacts with INPP5D/SHIP1. Glycosylated. Glycosylation plays an inhibitory role in the interaction with IgG3. In terms of processing, the soluble form is produced by a proteolytic cleavage. As to expression, expressed specifically by polymorphonuclear leukocytes (neutrophils). Also expressed by stimulated eosinophils.

It is found in the cell membrane. The protein resides in the secreted. Its function is as follows. Receptor for the Fc region of immunoglobulins gamma. Low affinity receptor. Binds complexed or aggregated IgG and also monomeric IgG. Contrary to III-A, is not capable to mediate antibody-dependent cytotoxicity and phagocytosis. May serve as a trap for immune complexes in the peripheral circulation which does not activate neutrophils. The protein is Low affinity immunoglobulin gamma Fc region receptor III-B (FCGR3B) of Homo sapiens (Human).